Consider the following 280-residue polypeptide: Alpha-aminoadipate--LysW ligase LysX (280 aa).

Residues K89, K129, G133–L139, Q169–R180, R194, and N202 each bind ATP. One can recognise an ATP-grasp domain in the interval S93–W276. 3 residues coordinate Mg(2+): D237, E249, and N251. The N-[TS] motif that is essential for LysX substrate specificity motif lies at N258 to S259.

The protein belongs to the RimK family. LysX subfamily. In terms of assembly, homodimer. The cofactor is Mg(2+).

The catalysed reaction is [amino-group carrier protein]-C-terminal-L-glutamate + L-2-aminoadipate + ATP = [amino-group carrier protein]-C-terminal-N-(1,4-dicarboxybutan-1-yl)-L-glutamine + ADP + phosphate + H(+). The protein operates within amino-acid biosynthesis; L-lysine biosynthesis via AAA pathway; L-lysine from L-alpha-aminoadipate (Thermus route): step 1/5. In terms of biological role, catalyzes the ATP-dependent formation of a covalent bond between the amino group of alpha-aminoadipate (AAA) and the gamma-carboxyl group of the C-terminal glutamate residue in LysW. The chain is Alpha-aminoadipate--LysW ligase LysX (lysX) from Thermus thermophilus (strain ATCC 27634 / DSM 579 / HB8).